A 237-amino-acid chain; its full sequence is Immunoglobulin superfamily member 6 (237 aa).

An N-terminal signal peptide occupies residues 1–27; the sequence is MGPVSARRSRLRPEISLILFQVGMVGA. Topologically, residues 28–152 are extracellular; that stretch reads CTVYVLQPGY…ERLFSKEVRS (125 aa). The Ig-like C2-type domain occupies 30 to 134; it reads VYVLQPGYLE…ELSPSAKHVG (105 aa). An intrachain disulfide couples C51 to C118. A helical membrane pass occupies residues 153–173; sequence FLIVLLALLSVYITGVCVTFI. Residues 174–237 lie on the Cytoplasmic side of the membrane; that stretch reads VLFKSKSNGP…RKALPNPGRA (64 aa). The span at 215–229 shows a compositional bias: basic and acidic residues; sequence TSHLPEQEGTDENRK. Positions 215-237 are disordered; the sequence is TSHLPEQEGTDENRKALPNPGRA.

Ubiquitous with higher expression in immune tissue.

It is found in the membrane. In Mus musculus (Mouse), this protein is Immunoglobulin superfamily member 6 (Igsf6).